The sequence spans 280 residues: Small ribosomal subunit protein uS2 (280 aa).

The protein belongs to the universal ribosomal protein uS2 family.

The chain is Small ribosomal subunit protein uS2 from Desulforapulum autotrophicum (strain ATCC 43914 / DSM 3382 / VKM B-1955 / HRM2) (Desulfobacterium autotrophicum).